The following is a 531-amino-acid chain: Probable mitochondrial-processing peptidase subunit beta, mitochondrial (531 aa).

A mitochondrion-targeting transit peptide spans 1–78 (MAMKNLLSLA…ENPDKRFLKY (78 aa)). Positions 30–50 (SAIDSVPASASPTALSPPPPH) are disordered. Histidine 141 contributes to the Zn(2+) binding site. Glutamate 144 acts as the Proton acceptor in catalysis. Position 145 (histidine 145) interacts with Zn(2+). Glutamate 214 is an active-site residue. Glutamate 221 lines the Zn(2+) pocket.

It belongs to the peptidase M16 family. As to quaternary structure, heterodimer of an alpha subunit and a beta subunit subunits, forming the mitochondrial processing protease (MPP) in which the alpha subunit is involved in substrate recognition and binding and the beta subunit is the catalytic subunit. Component of the ubiquinol-cytochrome c oxidoreductase (cytochrome b-c1 complex, complex III, CIII), a multisubunit enzyme composed of 10 subunits. The complex is composed of 3 respiratory subunits cytochrome b (MT-CYB), cytochrome c1 (CYC1-1 or CYC1-2) and Rieske protein (UCR1-1 or UCR1-2), 2 core protein subunits MPPalpha1 (or MPPalpha2) and MPPB, and 5 low-molecular weight protein subunits QCR7-1 (or QCR7-2), UCRQ-1 (or UCRQ-2), QCR9, UCRY and probably QCR6-1 (or QCR6-2). The complex exists as an obligatory dimer and forms supercomplexes (SCs) in the inner mitochondrial membrane with NADH-ubiquinone oxidoreductase (complex I, CI), resulting in different assemblies (supercomplexes SCI(1)III(2) and SCI(2)III(4)). Requires Zn(2+) as cofactor.

The protein resides in the mitochondrion. It localises to the mitochondrion inner membrane. The enzyme catalyses Release of N-terminal transit peptides from precursor proteins imported into the mitochondrion, typically with Arg in position P2.. Binding to the alpha subunit is required for catalytic activity. Catalytic subunit of the essential mitochondrial processing protease (MPP), which cleaves the mitochondrial sequence off newly imported precursors proteins. Preferentially, cleaves after an arginine at position P2. Functionally, component of the ubiquinol-cytochrome c oxidoreductase, a multisubunit transmembrane complex that is part of the mitochondrial electron transport chain which drives oxidative phosphorylation. The respiratory chain contains 3 multisubunit complexes succinate dehydrogenase (complex II, CII), ubiquinol-cytochrome c oxidoreductase (cytochrome b-c1 complex, complex III, CIII) and cytochrome c oxidase (complex IV, CIV), that cooperate to transfer electrons derived from NADH and succinate to molecular oxygen, creating an electrochemical gradient over the inner membrane that drives transmembrane transport and the ATP synthase. The cytochrome b-c1 complex catalyzes electron transfer from ubiquinol to cytochrome c, linking this redox reaction to translocation of protons across the mitochondrial inner membrane, with protons being carried across the membrane as hydrogens on the quinol. In the process called Q cycle, 2 protons are consumed from the matrix, 4 protons are released into the intermembrane space and 2 electrons are passed to cytochrome c. This is Probable mitochondrial-processing peptidase subunit beta, mitochondrial (MPPbeta) from Arabidopsis thaliana (Mouse-ear cress).